Reading from the N-terminus, the 229-residue chain is MANWTQLGLQDASSPLMEELIYFHDYTLIILTLITILVFYGLASLIVSSNTNRFFLEGQSLETIWTVIPAVILIFIALPSLQLLYLIDEVNNPFLTIKAIGHQWYWSYEYADYRDLEFDSYMIPTNDLTLGNPRLLEVDNRLTLPSQTPIRVLVTSSDVLHSWTVPSLGIKMDAVPGRLNQVNFFISRCGLFYGQCSEICGANHSFMPIVIESVNFSSFENWVSNFLNE.

Residues 1–26 lie on the Mitochondrial intermembrane side of the membrane; it reads MANWTQLGLQDASSPLMEELIYFHDY. A helical membrane pass occupies residues 27-48; that stretch reads TLIILTLITILVFYGLASLIVS. The Mitochondrial matrix segment spans residues 49–62; that stretch reads SNTNRFFLEGQSLE. The helical transmembrane segment at 63–82 threads the bilayer; sequence TIWTVIPAVILIFIALPSLQ. Residues 83-229 lie on the Mitochondrial intermembrane side of the membrane; it reads LLYLIDEVNN…ENWVSNFLNE (147 aa). Cu cation is bound by residues histidine 161, cysteine 196, glutamate 198, cysteine 200, histidine 204, and methionine 207. Position 198 (glutamate 198) interacts with Mg(2+).

It belongs to the cytochrome c oxidase subunit 2 family. In terms of assembly, component of the cytochrome c oxidase (complex IV, CIV), a multisubunit enzyme composed of a catalytic core of 3 subunits and several supernumerary subunits. The complex exists as a monomer or a dimer and forms supercomplexes (SCs) in the inner mitochondrial membrane with ubiquinol-cytochrome c oxidoreductase (cytochrome b-c1 complex, complex III, CIII). It depends on Cu cation as a cofactor.

Its subcellular location is the mitochondrion inner membrane. It catalyses the reaction 4 Fe(II)-[cytochrome c] + O2 + 8 H(+)(in) = 4 Fe(III)-[cytochrome c] + 2 H2O + 4 H(+)(out). Component of the cytochrome c oxidase, the last enzyme in the mitochondrial electron transport chain which drives oxidative phosphorylation. The respiratory chain contains 3 multisubunit complexes succinate dehydrogenase (complex II, CII), ubiquinol-cytochrome c oxidoreductase (cytochrome b-c1 complex, complex III, CIII) and cytochrome c oxidase (complex IV, CIV), that cooperate to transfer electrons derived from NADH and succinate to molecular oxygen, creating an electrochemical gradient over the inner membrane that drives transmembrane transport and the ATP synthase. Cytochrome c oxidase is the component of the respiratory chain that catalyzes the reduction of oxygen to water. Electrons originating from reduced cytochrome c in the intermembrane space (IMS) are transferred via the dinuclear copper A center (CU(A)) of subunit 2 and heme A of subunit 1 to the active site in subunit 1, a binuclear center (BNC) formed by heme A3 and copper B (CU(B)). The BNC reduces molecular oxygen to 2 water molecules using 4 electrons from cytochrome c in the IMS and 4 protons from the mitochondrial matrix. This chain is Cytochrome c oxidase subunit 2 (COII), found in Pisaster ochraceus (Ochre sea star).